A 188-amino-acid chain; its full sequence is Elongation factor P (188 aa).

The protein belongs to the elongation factor P family.

The protein resides in the cytoplasm. The protein operates within protein biosynthesis; polypeptide chain elongation. Involved in peptide bond synthesis. Stimulates efficient translation and peptide-bond synthesis on native or reconstituted 70S ribosomes in vitro. Probably functions indirectly by altering the affinity of the ribosome for aminoacyl-tRNA, thus increasing their reactivity as acceptors for peptidyl transferase. This Bradyrhizobium sp. (strain BTAi1 / ATCC BAA-1182) protein is Elongation factor P.